Here is a 129-residue protein sequence, read N- to C-terminus: Small ribosomal subunit protein uS11 (129 aa).

It belongs to the universal ribosomal protein uS11 family. As to quaternary structure, part of the 30S ribosomal subunit. Interacts with proteins S7 and S18. Binds to IF-3.

Located on the platform of the 30S subunit, it bridges several disparate RNA helices of the 16S rRNA. Forms part of the Shine-Dalgarno cleft in the 70S ribosome. This Staphylococcus haemolyticus (strain JCSC1435) protein is Small ribosomal subunit protein uS11.